A 310-amino-acid polypeptide reads, in one-letter code: Carbamate kinase 1 (310 aa).

Belongs to the carbamate kinase family.

The protein localises to the cytoplasm. It carries out the reaction hydrogencarbonate + NH4(+) + ATP = carbamoyl phosphate + ADP + H2O + H(+). It participates in metabolic intermediate metabolism; carbamoyl phosphate degradation; CO(2) and NH(3) from carbamoyl phosphate: step 1/1. The sequence is that of Carbamate kinase 1 (arcC1) from Staphylococcus epidermidis (strain ATCC 12228 / FDA PCI 1200).